The primary structure comprises 181 residues: Large ribosomal subunit protein eL18 (181 aa).

The protein belongs to the eukaryotic ribosomal protein eL18 family.

The protein resides in the cytoplasm. This Dictyostelium discoideum (Social amoeba) protein is Large ribosomal subunit protein eL18 (rpl18).